The following is a 469-amino-acid chain: GTPase Der (469 aa).

EngA-type G domains follow at residues 30–193 (PVLA…PEVA) and 203–376 (RRVA…ASWD). GTP-binding positions include 36 to 43 (GRPNVGKS), 83 to 87 (DTGGW), 145 to 148 (NKVD), 209 to 216 (GKPNVGKS), 256 to 260 (DTAGL), and 321 to 324 (NKWD). The region spanning 377-459 (TRIPTGPLNS…PIRINVRVRE (83 aa)) is the KH-like domain.

It belongs to the TRAFAC class TrmE-Era-EngA-EngB-Septin-like GTPase superfamily. EngA (Der) GTPase family. As to quaternary structure, associates with the 50S ribosomal subunit.

Its function is as follows. GTPase that plays an essential role in the late steps of ribosome biogenesis. This is GTPase Der from Mycobacterium marinum (strain ATCC BAA-535 / M).